The sequence spans 381 residues: Alanine racemase, catabolic (381 aa).

Catalysis depends on Lys-55, which acts as the Proton acceptor; specific for D-alanine. Lys-55 bears the N6-(pyridoxal phosphate)lysine mark. A substrate-binding site is contributed by Arg-154. The active-site Proton acceptor; specific for L-alanine is Tyr-276. Met-322 is a substrate binding site.

It belongs to the alanine racemase family. Requires pyridoxal 5'-phosphate as cofactor.

The catalysed reaction is L-alanine = D-alanine. In terms of biological role, isomerizes L-alanine to D-alanine which is then oxidized to pyruvate by DadA. The polypeptide is Alanine racemase, catabolic (dadB) (Mesorhizobium japonicum (strain LMG 29417 / CECT 9101 / MAFF 303099) (Mesorhizobium loti (strain MAFF 303099))).